We begin with the raw amino-acid sequence, 319 residues long: Coproporphyrin III ferrochelatase 2 (319 aa).

Residues Tyr13, Arg30, 46 to 47, Ser54, and Tyr125 contribute to the Fe-coproporphyrin III site; that span reads RY. Fe(2+) is bound by residues His181 and Glu262.

The protein belongs to the ferrochelatase family.

It is found in the cytoplasm. The catalysed reaction is Fe-coproporphyrin III + 2 H(+) = coproporphyrin III + Fe(2+). It functions in the pathway porphyrin-containing compound metabolism; protoheme biosynthesis. Its function is as follows. Involved in coproporphyrin-dependent heme b biosynthesis. Catalyzes the insertion of ferrous iron into coproporphyrin III to form Fe-coproporphyrin III. The protein is Coproporphyrin III ferrochelatase 2 of Bacillus cereus (strain ATCC 14579 / DSM 31 / CCUG 7414 / JCM 2152 / NBRC 15305 / NCIMB 9373 / NCTC 2599 / NRRL B-3711).